The chain runs to 358 residues: Type II restriction enzyme HpaII (358 aa).

In terms of assembly, homodimer.

The catalysed reaction is Endonucleolytic cleavage of DNA to give specific double-stranded fragments with terminal 5'-phosphates.. In terms of biological role, an E and P subtype restriction enzyme that recognizes the double-stranded sequence 5'-CCGG-3' and cleaves after C-1. This is Type II restriction enzyme HpaII from Haemophilus parainfluenzae.